The primary structure comprises 860 residues: Leucine--tRNA ligase (860 aa).

The 'HIGH' region motif lies at Pro-42–His-52. The short motif at Lys-619 to Ser-623 is the 'KMSKS' region element. Residue Lys-622 participates in ATP binding.

It belongs to the class-I aminoacyl-tRNA synthetase family.

It is found in the cytoplasm. The enzyme catalyses tRNA(Leu) + L-leucine + ATP = L-leucyl-tRNA(Leu) + AMP + diphosphate. The polypeptide is Leucine--tRNA ligase (Yersinia pseudotuberculosis serotype I (strain IP32953)).